Consider the following 183-residue polypeptide: Protein FAM180B (183 aa).

Residues 1–23 (MAATLQFLVCLVVAICLLSGVTT) form the signal peptide.

This sequence belongs to the FAM180 family.

The protein localises to the secreted. This is Protein FAM180B (FAM180B) from Homo sapiens (Human).